We begin with the raw amino-acid sequence, 225 residues long: Ribosomal RNA large subunit methyltransferase E (225 aa).

Gly-79, Trp-81, Asp-97, Asp-113, and Asp-137 together coordinate S-adenosyl-L-methionine. Lys-177 functions as the Proton acceptor in the catalytic mechanism.

Belongs to the class I-like SAM-binding methyltransferase superfamily. RNA methyltransferase RlmE family.

It is found in the cytoplasm. It catalyses the reaction uridine(2552) in 23S rRNA + S-adenosyl-L-methionine = 2'-O-methyluridine(2552) in 23S rRNA + S-adenosyl-L-homocysteine + H(+). In terms of biological role, specifically methylates the uridine in position 2552 of 23S rRNA at the 2'-O position of the ribose in the fully assembled 50S ribosomal subunit. The protein is Ribosomal RNA large subunit methyltransferase E of Acidiphilium cryptum (strain JF-5).